We begin with the raw amino-acid sequence, 41 residues long: Large ribosomal subunit protein bL36 (41 aa).

Belongs to the bacterial ribosomal protein bL36 family.

This chain is Large ribosomal subunit protein bL36, found in Vibrio vulnificus (strain YJ016).